A 316-amino-acid chain; its full sequence is UPF0613 protein PB24D3.06c (316 aa).

Belongs to the UPF0613 family.

Its subcellular location is the cytoplasm. The protein localises to the nucleus. This Schizosaccharomyces pombe (strain 972 / ATCC 24843) (Fission yeast) protein is UPF0613 protein PB24D3.06c.